The chain runs to 387 residues: Sorting nexin-7 (387 aa).

One can recognise a PX domain in the interval Lys30–Leu151. 4 residues coordinate a 1,2-diacyl-sn-glycero-3-phospho-(1D-myo-inositol-3-phosphate): Arg73, Gln75, Lys103, and Arg117. One can recognise a BAR domain in the interval Gly178–Leu387.

The protein belongs to the sorting nexin family. Heterodimer; heterodimerizes with SNX4.

The protein localises to the early endosome membrane. Its function is as follows. Involved in the regulation of endocytosis and in several stages of intracellular trafficking. Together with SNX4, involved in autophagosome assembly by regulating trafficking and recycling of phospholipid scramblase ATG9A. This Mus musculus (Mouse) protein is Sorting nexin-7.